The following is a 190-amino-acid chain: uncharacterized protein (190 aa).

The Cytoplasmic portion of the chain corresponds to methionine 1–lysine 55. Residues leucine 56–valine 76 form a helical membrane-spanning segment. Topologically, residues arginine 77–arginine 80 are extracellular. A helical membrane pass occupies residues glycine 81–leucine 101. Residues arginine 102–serine 123 lie on the Cytoplasmic side of the membrane. Residues isoleucine 124–valine 144 form a helical membrane-spanning segment. Residues glutamate 145–threonine 149 lie on the Extracellular side of the membrane. A helical transmembrane segment spans residues valine 150–alanine 170. At arginine 171–alanine 190 the chain is on the cytoplasmic side.

Its subcellular location is the membrane. This is an uncharacterized protein from Saccharomyces cerevisiae (strain ATCC 204508 / S288c) (Baker's yeast).